Consider the following 313-residue polypeptide: Ribosomal RNA small subunit methyltransferase H (313 aa).

Residues 35 to 37 (GGH), D55, F81, D103, and Q110 contribute to the S-adenosyl-L-methionine site.

The protein belongs to the methyltransferase superfamily. RsmH family.

The protein localises to the cytoplasm. The enzyme catalyses cytidine(1402) in 16S rRNA + S-adenosyl-L-methionine = N(4)-methylcytidine(1402) in 16S rRNA + S-adenosyl-L-homocysteine + H(+). Its function is as follows. Specifically methylates the N4 position of cytidine in position 1402 (C1402) of 16S rRNA. This is Ribosomal RNA small subunit methyltransferase H from Pseudomonas aeruginosa (strain UCBPP-PA14).